Consider the following 963-residue polypeptide: MAKGFYISKALGILGILLGVAAVATIIALSVVYAQEKNKNAEHVPQAPTSPTITTTAAITLDQSKPWNRYRLPTTLLPDSYNVTLRPYLTPNADGLYIFKGKSIVRLLCQEPTDVIIIHSKKLNYTTQGHMVVLRGVGDSQVPEIDRTELVELTEYLVVHLKGSLQPGHMYEMESEFQGELADDLAGFYRSEYMEGNVKKVLATTQMQSTDARKSFPCFDEPAMKATFNITLIHPNNLTALSNMPPKGSSTPLAEDPNWSVTEFETTPVMSTYLLAYIVSEFQSVNETAQNGVLIRIWARPNAIAEGHGMYALNVTGPILNFFANHYNTSYPLPKSDQIALPDFNAGAMENWGLVTYRENALLFDPQSSSISNKERVVTVIAHELAHQWFGNLVTLAWWNDLWLNEGFASYVEYLGADHAEPTWNLKDLIVPGDVYRVMAVDALASSHPLTTPAEEVNTPAQISEMFDSISYSKGASVIRMLSNFLTEDLFKEGLASYLHAFAYQNTTYLDLWEHLQKAVDAQTSIRLPDTVRAIMDRWTLQMGFPVITVDTKTGNISQKHFLLDSESNVTRSSAFDYLWIVPISSIKNGVMQDHYWLRDVSQAQNDLFKTASDDWVLLNVNVTGYFQVNYDEDNWRMIQHQLQTNLSVIPVINRAQVIYDSFNLATAHMVPVTLALDNTLFLNGEKEYMPWQAALSSLSYFSLMFDRSEVYGPMKKYLRKQVEPLFQHFETLTKNWTERPENLMDQYSEINAISTACSNGLPQCENLAKTLFDQWMSDPENNPIHPNLRSTIYCNAIAQGGQDQWDFAWGQLQQAQLVNEADKLRSALACSNEVWLLNRYLGYTLNPDLIRKQDATSTINSIASNVIGQPLAWDFVQSNWKKLFQDYGGGSFSFSNLIQGVTRRFSSEFELQQLEQFKKNNMDVGFGSGTRALEQALEKTKANIKWVKENKEVVLNWFIEHS.

The Cytoplasmic segment spans residues 2–8; it reads AKGFYIS. Residues 9 to 32 traverse the membrane as a helical; Signal-anchor for type II membrane protein segment; the sequence is KALGILGILLGVAAVATIIALSVV. Residues 33–64 form a cytosolic Ser/Thr-rich junction region; sequence YAQEKNKNAEHVPQAPTSPTITTTAAITLDQS. Residues 33–963 are Extracellular-facing; sequence YAQEKNKNAE…VVLNWFIEHS (931 aa). Positions 65–963 are metalloprotease; it reads KPWNRYRLPT…VVLNWFIEHS (899 aa). Residues Asn82 and Asn124 are each glycosylated (N-linked (GlcNAc...) asparagine). Tyr171 carries the sulfotyrosine modification. N-linked (GlcNAc...) asparagine glycosylation is found at Asn229, Asn237, Asn258, Asn286, Asn314, and Asn328. 347–351 contacts substrate; that stretch reads GAMEN. His383 provides a ligand contact to Zn(2+). The active-site Proton acceptor is the Glu384. His387 and Glu406 together coordinate Zn(2+). N-linked (GlcNAc...) asparagine glycosylation is found at Asn506, Asn556, Asn569, Asn622, Asn646, and Asn736. Residues 717–813 form an interaction with TGEV spike glycoprotein region; the sequence is KYLRKQVEPL…DQWDFAWGQL (97 aa). 2 disulfide bridges follow: Cys758–Cys765 and Cys795–Cys831.

This sequence belongs to the peptidase M1 family. As to quaternary structure, homodimer. Interacts with SLC6A19. In terms of assembly, (Microbial infection) Interacts with TGEV and PRCoV spike glycoprotein. It depends on Zn(2+) as a cofactor. Sulfated. Post-translationally, N- and O-glycosylated. In terms of processing, may undergo proteolysis and give rise to a soluble form.

Its subcellular location is the cell membrane. The enzyme catalyses Release of an N-terminal amino acid, Xaa-|-Yaa- from a peptide, amide or arylamide. Xaa is preferably Ala, but may be most amino acids including Pro (slow action). When a terminal hydrophobic residue is followed by a prolyl residue, the two may be released as an intact Xaa-Pro dipeptide.. Functionally, broad specificity aminopeptidase which plays a role in the final digestion of peptides generated from hydrolysis of proteins by gastric and pancreatic proteases. Also involved in the processing of various peptides including peptide hormones, such as angiotensin III and IV, neuropeptides, and chemokines. May also be involved the cleavage of peptides bound to major histocompatibility complex class II molecules of antigen presenting cells. May have a role in angiogenesis and promote cholesterol crystallization. It is able to degrade Leu-enkephalin and Met-enkephalin but not cholecystokinin CCK8, neuromedin C (GRP-10), somatostatin-14, substance P and vasoactive intestinal peptide. May have a role in amino acid transport by acting as binding partner of amino acid transporter SLC6A19 and regulating its activity. (Microbial infection) In case of porcine transmissible gastroenteritis coronavirus (TGEV) and porcine respiratory coronavirus (PRCoV) infections, serves as a receptor for TGEV and PRCoV spike glycoprotein in a species-specific manner. The protein is Aminopeptidase N (ANPEP) of Sus scrofa (Pig).